We begin with the raw amino-acid sequence, 230 residues long: MSKLVLIRHGQSEWNLSNQFTGWVDVNLSEKGVEEAKKAGRLIKEHGLEFDQAYTSLLTRAIKTLHYALEESDQLWIPETKTWRLNERHYGALQGLNKKDTAEKYGDEQVHIWRRSYDVLPPAIDDDNEYSQAHDRRYANLDPHIVPKAENLHVTLDRVMPFWEDHIAPDLLDGKNVIIAAHGNSLRALTKYIENISDDDIMDLEMKTGEPVVYTFDDKLDVVNKEKLDD.

Substrate is bound by residues 8 to 15 (RHGQSEWN), 21 to 22 (TG), arginine 60, 87 to 90 (ERHY), lysine 98, 114 to 115 (RR), and 183 to 184 (GN). Catalysis depends on histidine 9, which acts as the Tele-phosphohistidine intermediate. Glutamate 87 acts as the Proton donor/acceptor in catalysis.

Belongs to the phosphoglycerate mutase family. BPG-dependent PGAM subfamily.

The catalysed reaction is (2R)-2-phosphoglycerate = (2R)-3-phosphoglycerate. Its pathway is carbohydrate degradation; glycolysis; pyruvate from D-glyceraldehyde 3-phosphate: step 3/5. Catalyzes the interconversion of 2-phosphoglycerate and 3-phosphoglycerate. This is 2,3-bisphosphoglycerate-dependent phosphoglycerate mutase 1 from Lactobacillus johnsonii (strain CNCM I-12250 / La1 / NCC 533).